Here is a 275-residue protein sequence, read N- to C-terminus: Undecaprenyl-diphosphatase (275 aa).

8 helical membrane passes run 2 to 22 (LDIFKAVILGIVEGITEFLPI), 43 to 63 (FTDMFNVVIQLGAIMAVVVLY), 83 to 103 (WVLWSKVLLAVIPSVIVGLPL), 111 to 131 (LMNWAVVSATLIIYGVLFIVI), 147 to 167 (TLPYTTALFIGCFQLLSLIPG), 186 to 206 (YVATEFSFFMAIPTMFGASLL), 221 to 241 (LQGAVLAVGVIVSFVVAYLSI), and 255 to 275 (AFGWYRIVLGVLVIGYFTLIH).

Belongs to the UppP family.

It localises to the cell membrane. The catalysed reaction is di-trans,octa-cis-undecaprenyl diphosphate + H2O = di-trans,octa-cis-undecaprenyl phosphate + phosphate + H(+). In terms of biological role, catalyzes the dephosphorylation of undecaprenyl diphosphate (UPP). Confers resistance to bacitracin. The sequence is that of Undecaprenyl-diphosphatase from Lactiplantibacillus plantarum (strain ATCC BAA-793 / NCIMB 8826 / WCFS1) (Lactobacillus plantarum).